Here is a 208-residue protein sequence, read N- to C-terminus: MTKGILGKKVGMTQIFTEAGELIPVTVIEATPNVVLQVKTVETDGYNAVQVGFDDLRDVLSNKPAKGHVAKANTAPKRFIREFKNIEGLEVGAEITVDTFAAGDVVDVTGTSKGKGFQGVIKRHGQSRGPMAHGSRYHRRPGSMGPVAPNRVFKNKHLAGRMGGNRVTIQNLEIAQVVPEKNVILIKGNVPGAKKSLITIKSAVKAGK.

Residues 123–147 (RHGQSRGPMAHGSRYHRRPGSMGPV) form a disordered region.

The protein belongs to the universal ribosomal protein uL3 family. Part of the 50S ribosomal subunit. Forms a cluster with proteins L14 and L19.

One of the primary rRNA binding proteins, it binds directly near the 3'-end of the 23S rRNA, where it nucleates assembly of the 50S subunit. In Streptococcus gordonii (strain Challis / ATCC 35105 / BCRC 15272 / CH1 / DL1 / V288), this protein is Large ribosomal subunit protein uL3.